A 240-amino-acid polypeptide reads, in one-letter code: tRNA (guanine-N(1)-)-methyltransferase (240 aa).

Residues Gly-108 and 127–132 contribute to the S-adenosyl-L-methionine site; that span reads LGDYIL.

The protein belongs to the RNA methyltransferase TrmD family. As to quaternary structure, homodimer.

Its subcellular location is the cytoplasm. It catalyses the reaction guanosine(37) in tRNA + S-adenosyl-L-methionine = N(1)-methylguanosine(37) in tRNA + S-adenosyl-L-homocysteine + H(+). Its function is as follows. Specifically methylates guanosine-37 in various tRNAs. The sequence is that of tRNA (guanine-N(1)-)-methyltransferase from Streptococcus sanguinis (strain SK36).